The primary structure comprises 251 residues: uncharacterized protein (251 aa).

It to M.jannaschii MJ0638 and MJ1123 and M.tuberculosis Rv2003c.

This is an uncharacterized protein from Methanocaldococcus jannaschii (strain ATCC 43067 / DSM 2661 / JAL-1 / JCM 10045 / NBRC 100440) (Methanococcus jannaschii).